The following is a 366-amino-acid chain: Cobalt-precorrin-5B C(1)-methyltransferase (366 aa).

The protein belongs to the CbiD family.

It catalyses the reaction Co-precorrin-5B + S-adenosyl-L-methionine = Co-precorrin-6A + S-adenosyl-L-homocysteine. The protein operates within cofactor biosynthesis; adenosylcobalamin biosynthesis; cob(II)yrinate a,c-diamide from sirohydrochlorin (anaerobic route): step 6/10. Its function is as follows. Catalyzes the methylation of C-1 in cobalt-precorrin-5B to form cobalt-precorrin-6A. The sequence is that of Cobalt-precorrin-5B C(1)-methyltransferase from Thermoanaerobacter sp. (strain X514).